A 618-amino-acid polypeptide reads, in one-letter code: Dihydroxy-acid dehydratase (618 aa).

Asp81 lines the Mg(2+) pocket. [2Fe-2S] cluster is bound at residue Cys122. Mg(2+)-binding residues include Asp123 and Lys124. Lys124 bears the N6-carboxylysine mark. Residue Cys195 coordinates [2Fe-2S] cluster. A Mg(2+)-binding site is contributed by Glu490. The active-site Proton acceptor is the Ser516.

It belongs to the IlvD/Edd family. In terms of assembly, homodimer. It depends on [2Fe-2S] cluster as a cofactor. Requires Mg(2+) as cofactor.

It catalyses the reaction (2R)-2,3-dihydroxy-3-methylbutanoate = 3-methyl-2-oxobutanoate + H2O. The enzyme catalyses (2R,3R)-2,3-dihydroxy-3-methylpentanoate = (S)-3-methyl-2-oxopentanoate + H2O. It participates in amino-acid biosynthesis; L-isoleucine biosynthesis; L-isoleucine from 2-oxobutanoate: step 3/4. It functions in the pathway amino-acid biosynthesis; L-valine biosynthesis; L-valine from pyruvate: step 3/4. In terms of biological role, functions in the biosynthesis of branched-chain amino acids. Catalyzes the dehydration of (2R,3R)-2,3-dihydroxy-3-methylpentanoate (2,3-dihydroxy-3-methylvalerate) into 2-oxo-3-methylpentanoate (2-oxo-3-methylvalerate) and of (2R)-2,3-dihydroxy-3-methylbutanoate (2,3-dihydroxyisovalerate) into 2-oxo-3-methylbutanoate (2-oxoisovalerate), the penultimate precursor to L-isoleucine and L-valine, respectively. This Gluconobacter oxydans (strain 621H) (Gluconobacter suboxydans) protein is Dihydroxy-acid dehydratase.